Reading from the N-terminus, the 498-residue chain is Glycerol kinase (498 aa).

Position 13 (Thr13) interacts with ADP. The ATP site is built by Thr13, Thr14, and Ser15. Thr13 lines the sn-glycerol 3-phosphate pocket. An ADP-binding site is contributed by Arg17. The sn-glycerol 3-phosphate site is built by Arg83, Glu84, Tyr135, and Asp244. Positions 83, 84, 135, 244, and 245 each coordinate glycerol. Residues Thr266 and Gly309 each contribute to the ADP site. ATP is bound by residues Thr266, Gly309, Gln313, and Gly410. The ADP site is built by Gly410 and Asn414.

The protein belongs to the FGGY kinase family.

The catalysed reaction is glycerol + ATP = sn-glycerol 3-phosphate + ADP + H(+). The protein operates within polyol metabolism; glycerol degradation via glycerol kinase pathway; sn-glycerol 3-phosphate from glycerol: step 1/1. With respect to regulation, inhibited by fructose 1,6-bisphosphate (FBP). Its function is as follows. Key enzyme in the regulation of glycerol uptake and metabolism. Catalyzes the phosphorylation of glycerol to yield sn-glycerol 3-phosphate. In Koribacter versatilis (strain Ellin345), this protein is Glycerol kinase.